Here is a 550-residue protein sequence, read N- to C-terminus: Hydroxylamine reductase (550 aa).

The [2Fe-2S] cluster site is built by Cys3, Cys6, Cys18, and Cys25. His249, Glu273, Cys317, Cys405, Cys433, Cys458, Glu492, and Lys494 together coordinate hybrid [4Fe-2O-2S] cluster. Cys405 is subject to Cysteine persulfide.

This sequence belongs to the HCP family. The cofactor is [2Fe-2S] cluster. Hybrid [4Fe-2O-2S] cluster is required as a cofactor.

The protein localises to the cytoplasm. It carries out the reaction A + NH4(+) + H2O = hydroxylamine + AH2 + H(+). In terms of biological role, catalyzes the reduction of hydroxylamine to form NH(3) and H(2)O. This chain is Hydroxylamine reductase, found in Salmonella paratyphi A (strain ATCC 9150 / SARB42).